The sequence spans 146 residues: Mite group 2 allergen Der p 2 (146 aa).

The first 17 residues, 1-17 (MMYKILCLSLLVAAVAR), serve as a signal peptide directing secretion. 3 disulfides stabilise this stretch: Cys-25–Cys-136, Cys-38–Cys-44, and Cys-90–Cys-95.

The protein belongs to the NPC2 family.

The protein resides in the secreted. This Dermatophagoides pteronyssinus (European house dust mite) protein is Mite group 2 allergen Der p 2 (DERP2).